Here is a 467-residue protein sequence, read N- to C-terminus: Putative odorant receptor 85e (467 aa).

The Cytoplasmic portion of the chain corresponds to 1–60; the sequence is MASLQFHGNVDADIRYDISLDPARESNLFRLLMGLQLANGTKPSPRLPKWWPKRLEMIGK. A helical transmembrane segment spans residues 61–81; sequence VLPKAYCSMVIFTSLHLGVLF. At 82–98 the chain is on the extracellular side; sequence TKTTLDVLPTGELQAIT. The helical transmembrane segment at 99–119 threads the bilayer; sequence DALTMTIIYFFTGYGTIYWCL. The Cytoplasmic portion of the chain corresponds to 120–159; it reads RSRRLLAYMEHMNREYRHHSLAGVTFVSSHAAFRMSRNFT. Residues 160 to 180 form a helical membrane-spanning segment; sequence VVWIMSCLLGVISWGVSPLML. At 181-212 the chain is on the extracellular side; it reads GIRMLPLQCWYPFDALGPGTYTAVYATQLFGQ. The chain crosses the membrane as a helical span at residues 213–233; that stretch reads IMVGMTFGFGGSLFVTLSLLL. Residues 234–286 are Cytoplasmic-facing; the sequence is LGQFDVLYCSLKNLDAHTKLLGGESVNGLSSLQEELLLGDSKRELNQYVLLQE. The chain crosses the membrane as a helical span at residues 287-307; that stretch reads HPTDLLRLSAGRKCPDQGNAF. The Extracellular portion of the chain corresponds to 308–334; it reads HNALVECIRLHRFILHCSQELENLFSP. Residues 335–355 traverse the membrane as a helical segment; it reads YCLVKSLQITFQLCLLVFVGV. Residues 356-367 are Cytoplasmic-facing; sequence SGTREVLRIVNQ. A helical membrane pass occupies residues 368 to 388; the sequence is LQYLGLTIFELLMFTYCGELL. Over 389 to 467 the chain is Extracellular; sequence SRHSIRSGDA…LAAKKTESEL (79 aa).

Belongs to the insect chemoreceptor superfamily. Heteromeric odorant receptor channel (TC 1.A.69) family. Or2a subfamily. As to quaternary structure, interacts with Orco. Complexes exist early in the endomembrane system in olfactory sensory neurons (OSNs), coupling these complexes to the conserved ciliary trafficking pathway. As to expression, expressed in 15% of the 120 sensory neurons within the maxillary palp.

Its subcellular location is the cell membrane. Functionally, odorant receptor which mediates acceptance or avoidance behavior, depending on its substrates. The odorant receptor repertoire encodes a large collection of odor stimuli that vary widely in identity, intensity, and duration. May form a complex with Orco to form odorant-sensing units, providing sensitive and prolonged odorant signaling and calcium permeability. This chain is Putative odorant receptor 85e (Or85e), found in Drosophila melanogaster (Fruit fly).